Reading from the N-terminus, the 252-residue chain is MERVLIVNADDFGLSKGQNYGIVEAYRNGVVTSTTALVNGEAIDHAAQLSRELPALGVGMHFVLTLGKPVSEMPGLTRDGLLGKWIWQMAEEDTLPLDEIAHELACQYQRFIDVFGREPTHLDSHHHVHMFPQIFPIVARFAAQRGIALRIDRQTVLNADDLPSDLRSTQGFSSEFYGEEITEACFLRILDASAHRGEASLEVMCHPAFVDNIIRQSAYCYPRLTELEVLTSASLKAAIAERGYRPGSFLDI.

Histidine 61 and histidine 125 together coordinate Mg(2+).

It belongs to the YdjC deacetylase family. ChbG subfamily. In terms of assembly, homodimer. The cofactor is Mg(2+).

It localises to the cytoplasm. It catalyses the reaction N,N'-diacetylchitobiose + H2O = N-acetyl-beta-D-glucosaminyl-(1-&gt;4)-D-glucosamine + acetate. The catalysed reaction is diacetylchitobiose-6'-phosphate + H2O = N'-monoacetylchitobiose-6'-phosphate + acetate. It functions in the pathway glycan degradation; chitin degradation. In terms of biological role, involved in the degradation of chitin. ChbG is essential for growth on the acetylated chitooligosaccharides chitobiose and chitotriose but is dispensable for growth on cellobiose and chitosan dimer, the deacetylated form of chitobiose. Deacetylation of chitobiose-6-P and chitotriose-6-P is necessary for both the activation of the chb promoter by the regulatory protein ChbR and the hydrolysis of phosphorylated beta-glucosides by the phospho-beta-glucosidase ChbF. Catalyzes the removal of only one acetyl group from chitobiose-6-P to yield monoacetylchitobiose-6-P, the inducer of ChbR and the substrate of ChbF. In Salmonella paratyphi A (strain ATCC 9150 / SARB42), this protein is Chitooligosaccharide deacetylase.